A 273-amino-acid chain; its full sequence is 2-dehydro-3-deoxyphosphooctonate aldolase (273 aa).

The protein belongs to the KdsA family.

It localises to the cytoplasm. It catalyses the reaction D-arabinose 5-phosphate + phosphoenolpyruvate + H2O = 3-deoxy-alpha-D-manno-2-octulosonate-8-phosphate + phosphate. Its pathway is carbohydrate biosynthesis; 3-deoxy-D-manno-octulosonate biosynthesis; 3-deoxy-D-manno-octulosonate from D-ribulose 5-phosphate: step 2/3. The protein operates within bacterial outer membrane biogenesis; lipopolysaccharide biosynthesis. The protein is 2-dehydro-3-deoxyphosphooctonate aldolase of Nitratidesulfovibrio vulgaris (strain DP4) (Desulfovibrio vulgaris).